A 450-amino-acid polypeptide reads, in one-letter code: Tubulin alpha-4 chain (450 aa).

Gln-11 contacts GTP. An N6-acetyllysine modification is found at Lys-40. Positions 71, 144, 145, 179, 206, and 228 each coordinate GTP. Residue Glu-71 coordinates Mg(2+). Residue Glu-254 is part of the active site. A disordered region spans residues 431–450 (DYEEVGAESGEGDEGDEEEY).

The protein belongs to the tubulin family. Dimer of alpha and beta chains. A typical microtubule is a hollow water-filled tube with an outer diameter of 25 nm and an inner diameter of 15 nM. Alpha-beta heterodimers associate head-to-tail to form protofilaments running lengthwise along the microtubule wall with the beta-tubulin subunit facing the microtubule plus end conferring a structural polarity. Microtubules usually have 13 protofilaments but different protofilament numbers can be found in some organisms and specialized cells. It depends on Mg(2+) as a cofactor. Undergoes a tyrosination/detyrosination cycle, the cyclic removal and re-addition of a C-terminal tyrosine residue by the enzymes tubulin tyrosine carboxypeptidase (TTCP) and tubulin tyrosine ligase (TTL), respectively. Post-translationally, acetylation of alpha chains at Lys-40 stabilizes microtubules and affects affinity and processivity of microtubule motors. This modification has a role in multiple cellular functions, ranging from cell motility, cell cycle progression or cell differentiation to intracellular trafficking and signaling.

It is found in the cytoplasm. The protein localises to the cytoskeleton. It carries out the reaction GTP + H2O = GDP + phosphate + H(+). Its function is as follows. Tubulin is the major constituent of microtubules, a cylinder consisting of laterally associated linear protofilaments composed of alpha- and beta-tubulin heterodimers. Microtubules grow by the addition of GTP-tubulin dimers to the microtubule end, where a stabilizing cap forms. Below the cap, tubulin dimers are in GDP-bound state, owing to GTPase activity of alpha-tubulin. This chain is Tubulin alpha-4 chain, found in Gossypium hirsutum (Upland cotton).